A 532-amino-acid polypeptide reads, in one-letter code: Flavin-containing monooxygenase 3 (532 aa).

Residues G9–S13, E32, L40–W41, and N61–S62 each bind FAD. Residues S60–N61 and S195–D198 each bind NADP(+). Phosphoserine is present on S401. A helical transmembrane segment spans residues F510 to V530.

This sequence belongs to the FMO family. Requires FAD as cofactor. As to expression, liver.

Its subcellular location is the microsome membrane. It is found in the endoplasmic reticulum membrane. It catalyses the reaction trimethylamine + NADPH + O2 = trimethylamine N-oxide + NADP(+) + H2O. It carries out the reaction N,N-dimethylaniline + NADPH + O2 + H(+) = N,N-dimethylaniline N-oxide + NADP(+) + H2O. The catalysed reaction is hypotaurine + NADPH + O2 + H(+) = taurine + NADP(+) + H2O. The enzyme catalyses (S)-nicotine + NADPH + O2 = trans-(S)-nicotine N(1')-oxide + NADP(+) + H2O. It catalyses the reaction albendazole + NADPH + O2 + H(+) = albendazole S-oxide + NADP(+) + H2O. Essential hepatic enzyme that catalyzes the oxygenation of a wide variety of nitrogen- and sulfur-containing compounds including drugs as well as dietary compounds. Plays an important role in the metabolism of trimethylamine (TMA), via the production of trimethylamine N-oxide (TMAO) metabolite. TMA is generated by the action of gut microbiota using dietary precursors such as choline, choline containing compounds, betaine or L-carnitine. By regulating TMAO concentration, FMO3 directly impacts both platelet responsiveness and rate of thrombus formation. The sequence is that of Flavin-containing monooxygenase 3 (FMO3) from Homo sapiens (Human).